The following is a 434-amino-acid chain: Iron transporter MagA (434 aa).

Helical transmembrane passes span 6–26, 31–51, 56–76, 86–106, 113–133, 176–196, 269–289, 294–314, 321–341, and 357–377; these read PELT…GMMT, PAVV…FGLV, AVAT…GMKL, KTAI…ALLL, SLGL…AVVI, LLPA…LLFW, SVLL…KFIW, TVLT…VTAL, WPSA…SFLL, and KLVV…LFTM.

This sequence belongs to the monovalent cation:proton antiporter 2 (CPA2) transporter (TC 2.A.37) family.

The protein localises to the membrane. In terms of biological role, iron transporter, which is required for the synthesis of bacterial magnetic particles (BMPs). Probably involved in the transport of iron from the environment into the cytoplasm across the cell membrane, and then from the cytoplasm into the BMP lipid vesicle across the BMP membrane. This Paramagnetospirillum magneticum (strain ATCC 700264 / AMB-1) (Magnetospirillum magneticum) protein is Iron transporter MagA (magA).